Consider the following 274-residue polypeptide: Thiamine kinase (274 aa).

It belongs to the thiamine kinase family.

It carries out the reaction thiamine + ATP = thiamine phosphate + ADP + H(+). It functions in the pathway cofactor biosynthesis; thiamine diphosphate biosynthesis; thiamine phosphate from thiamine: step 1/1. Catalyzes the ATP-dependent phosphorylation of thiamine to thiamine phosphate. Is involved in thiamine salvage. In Escherichia coli O9:H4 (strain HS), this protein is Thiamine kinase.